We begin with the raw amino-acid sequence, 417 residues long: Serine hydroxymethyltransferase (417 aa).

(6S)-5,6,7,8-tetrahydrofolate contacts are provided by residues leucine 121 and glycine 125–leucine 127. Lysine 229 is modified (N6-(pyridoxal phosphate)lysine). Serine 355–phenylalanine 357 is a (6S)-5,6,7,8-tetrahydrofolate binding site.

This sequence belongs to the SHMT family. As to quaternary structure, homodimer. Pyridoxal 5'-phosphate serves as cofactor.

It localises to the cytoplasm. The enzyme catalyses (6R)-5,10-methylene-5,6,7,8-tetrahydrofolate + glycine + H2O = (6S)-5,6,7,8-tetrahydrofolate + L-serine. It functions in the pathway one-carbon metabolism; tetrahydrofolate interconversion. The protein operates within amino-acid biosynthesis; glycine biosynthesis; glycine from L-serine: step 1/1. Its function is as follows. Catalyzes the reversible interconversion of serine and glycine with tetrahydrofolate (THF) serving as the one-carbon carrier. This reaction serves as the major source of one-carbon groups required for the biosynthesis of purines, thymidylate, methionine, and other important biomolecules. Also exhibits THF-independent aldolase activity toward beta-hydroxyamino acids, producing glycine and aldehydes, via a retro-aldol mechanism. In Buchnera aphidicola subsp. Acyrthosiphon pisum (strain APS) (Acyrthosiphon pisum symbiotic bacterium), this protein is Serine hydroxymethyltransferase.